The chain runs to 570 residues: Sulfite reductase [NADPH] hemoprotein beta-component (570 aa).

Positions 434, 440, 479, and 483 each coordinate [4Fe-4S] cluster. Cys483 lines the siroheme pocket.

The protein belongs to the nitrite and sulfite reductase 4Fe-4S domain family. In terms of assembly, alpha(8)-beta(8). The alpha component is a flavoprotein, the beta component is a hemoprotein. The cofactor is siroheme. [4Fe-4S] cluster serves as cofactor.

The catalysed reaction is hydrogen sulfide + 3 NADP(+) + 3 H2O = sulfite + 3 NADPH + 4 H(+). It functions in the pathway sulfur metabolism; hydrogen sulfide biosynthesis; hydrogen sulfide from sulfite (NADPH route): step 1/1. Functionally, component of the sulfite reductase complex that catalyzes the 6-electron reduction of sulfite to sulfide. This is one of several activities required for the biosynthesis of L-cysteine from sulfate. The chain is Sulfite reductase [NADPH] hemoprotein beta-component from Escherichia coli O17:K52:H18 (strain UMN026 / ExPEC).